Reading from the N-terminus, the 118-residue chain is Large ribosomal subunit protein bL19 (118 aa).

This sequence belongs to the bacterial ribosomal protein bL19 family.

In terms of biological role, this protein is located at the 30S-50S ribosomal subunit interface and may play a role in the structure and function of the aminoacyl-tRNA binding site. In Salinibacter ruber (strain DSM 13855 / M31), this protein is Large ribosomal subunit protein bL19.